Reading from the N-terminus, the 850-residue chain is Pre-mRNA-splicing factor SYF1 (850 aa).

11 HAT repeats span residues 25 to 57 (IQPSIDDLPYEEDVSKNPYSVNCWLRYLEFKQG), 58 to 90 (SPQKQRNYIYERAIRELPRSYKIWHQYLLERTL), 100 to 132 (NSFEAVNTLFERSLVFLDKMPRIWIEYCEFLMI), 134 to 168 (EKITLTRKTFDRALIALPVTQHYRIWNEYTKFILK), 171 to 203 (IPSLTCIRVYKRYLKIQPEKVEEYIEYLIKIKE), 281 to 316 (AQFEKARDIFEEALTSVGTARDFSFIWESYTQFEDS), 477 to 509 (KKQNTIIEENEPVQKRLFKSIKIWTFYVDLEES), 511 to 543 (GTFHNTKSIYEKMIQLKVVTPQIILNFAKYLEE), 545 to 579 (KYFEDMFKAYEHGVQLFLFPHVQDIWITYLTKFIQ), 584 to 618 (MKLERTRDLFEQVLSKVPPKESIIFYLMYANFEEQ), and 692 to 726 (GEIDRARSIYIHGSQFSDPRTSMFYWNTWSDFEKL). Basic and acidic residues predominate over residues 761 to 771 (NNKDDKDDKNQ). Positions 761–837 (NNKDDKDDKN…EEEEEEEDQL (77 aa)) are disordered. Positions 772–792 (QQKQQQQQQEKQQQQQQQQQQ) are enriched in low complexity. Residues 793–812 (ASTLTKSKPVTVSLPETIQY) show a composition bias toward polar residues. The span at 818 to 836 (NDDEINLDDDEEEEEEEDQ) shows a compositional bias: acidic residues.

The protein belongs to the crooked-neck family. In terms of assembly, identified in the spliceosome C complex.

It localises to the nucleus. Its function is as follows. Involved in pre-mRNA splicing as component of the spliceosome. Involved in transcription-coupled repair (TCR), transcription and pre-mRNA splicing. The protein is Pre-mRNA-splicing factor SYF1 (xab2) of Dictyostelium discoideum (Social amoeba).